Consider the following 160-residue polypeptide: Complexin-4 (160 aa).

The tract at residues 14-44 is disordered; that stretch reads KNLGFGGGSEEKKEEGGTSDPAAAKGMTREE. Cysteine 157 carries the post-translational modification Cysteine methyl ester. A lipid anchor (S-farnesyl cysteine) is attached at cysteine 157. Residues 158-160 constitute a propeptide, removed in mature form; that stretch reads SVM.

The protein belongs to the complexin/synaphin family. As to quaternary structure, weakly binds to the SNARE core complex containing SNAP25, VAMP2 and STX1A. In terms of processing, farnesylation mediates presynaptic targeting and is important for function in neurotransmitter release. Present specifically in the retina (at protein level). Expressed in the outer nuclear layer of the retina (at protein level). Strongly expressed at rod photoreceptor ribbon synapses (at protein level). Not expressed at conventional amacrine cell synapses, nor at cone photoreceptor ribbon synapses (at protein level). Weakly expressed at cone photoreceptor synaptic terminals (at protein level). Not expressed in the brain (at protein level).

It localises to the synapse. Its subcellular location is the cell membrane. Complexin that regulates SNARE protein complex-mediated synaptic vesicle fusion. Required for the maintenance of synaptic ultrastructure in the adult retina. Positively regulates synaptic transmission through synaptic vesicle availability and exocytosis of neurotransmitters at photoreceptor ribbon synapses in the retina. Suppresses tonic photoreceptor activity and baseline 'noise' by suppression of Ca(2+) vesicle tonic release and the facilitation of evoked synchronous and asynchronous Ca(2+) vesicle release. The chain is Complexin-4 (Cplx4) from Mus musculus (Mouse).